The following is a 793-amino-acid chain: Xaa-Pro dipeptidyl-peptidase (793 aa).

Active-site charge relay system residues include S363, D483, and H514.

The protein belongs to the peptidase S15 family. Homodimer.

It localises to the cytoplasm. The catalysed reaction is Hydrolyzes Xaa-Pro-|- bonds to release unblocked, N-terminal dipeptides from substrates including Ala-Pro-|-p-nitroanilide and (sequentially) Tyr-Pro-|-Phe-Pro-|-Gly-Pro-|-Ile.. In terms of biological role, removes N-terminal dipeptides sequentially from polypeptides having unsubstituted N-termini provided that the penultimate residue is proline. The polypeptide is Xaa-Pro dipeptidyl-peptidase (Lactobacillus helveticus (strain DPC 4571)).